A 254-amino-acid chain; its full sequence is Mitochondrial cardiolipin hydrolase (254 aa).

Topologically, residues 1 to 9 are mitochondrial intermembrane; the sequence is MERFRWQVA. The tract at residues 1–43 is required for mitochondrial localization; that stretch reads MERFRWQVAAVAAVGLALALEALPSVLCWLRAGRRQQQRPPRR. A helical transmembrane segment spans residues 10–32; that stretch reads AVAAVGLALALEALPSVLCWLRA. Residues 33–254 lie on the Cytoplasmic side of the membrane; sequence GRRQQQRPPR…SKCSHHLSQV (222 aa). The segment at 49-82 adopts a C3H1-type; atypical zinc-finger fold; it reads PSQVTCTEALLQAPGEAPSGPPAGCRCSLPHGES. Positions 155–182 constitute a PLD phosphodiesterase domain; sequence DLGYMHHKFAIVDKKVLITGSLNWTTQA. Residues His160, Lys162, and Asp167 contribute to the active site.

The protein belongs to the phospholipase D family. MitoPLD/Zucchini subfamily. In terms of assembly, homodimer. Interacts with MOV10L1. Interacts with MIGA1 and MIGA2; possibly facilitating homodimer formation. Interacts with GK2.

It localises to the mitochondrion outer membrane. Its subcellular location is the nucleus membrane. The protein resides in the cell membrane. It is found in the golgi apparatus. It carries out the reaction a cardiolipin + H2O = a 1,2-diacyl-sn-glycero-3-phospho-(1'-sn-glycerol) + a 1,2-diacyl-sn-glycero-3-phosphate + H(+). Single stranded DNA (ssDNA) hydrolase activity does not depend upon, but is stimulated by the presence of Ca(2+) and Mn(2+). MIGA1 and MIGA2 increase PLD6 self-association affinity and affects the homodimer conformation facilitating its phospholipase activity over the nuclease activity. MYC induces its expression and stimulates its phospholipase activity. Its function is as follows. Presents phospholipase and nuclease activities, depending on the different physiological conditions. Interaction with Mitoguardin (MIGA1 or MIGA2) affects the dimer conformation, facilitating the lipase activity over the nuclease activity. Plays a key role in mitochondrial fusion and fission via its phospholipase activity. In its phospholipase role, it uses the mitochondrial lipid cardiolipin as substrate to generate phosphatidate (PA or 1,2-diacyl-sn-glycero-3-phosphate), a second messenger signaling lipid. Production of PA facilitates Mitofusin-mediated fusion, whereas the cleavage of PA by the Lipin family of phosphatases produces diacylgycerol (DAG) which promotes mitochondrial fission. Both Lipin and DAG regulate mitochondrial dynamics and membrane fusion/fission, important processes for adapting mitochondrial metabolism to changes in cell physiology. Mitochondrial fusion enables cells to cope with the increased nucleotide demand during DNA synthesis. Mitochondrial function and dynamics are closely associated with biological processes such as cell growth, proliferation, and differentiation. Mediator of MYC activity, promotes mitochondrial fusion and activates AMPK which in turn inhibits YAP/TAZ, thereby inducing cell growth and proliferation. The endonuclease activity plays a critical role in PIWI-interacting RNA (piRNA) biogenesis during spermatogenesis. Implicated in spermatogenesis and sperm fertility in testicular germ cells, its single strand-specific nuclease activity is critical for the biogenesis/maturation of PIWI-interacting RNA (piRNA). MOV10L1 selectively binds to piRNA precursors and funnels them to the endonuclease that catalyzes the first cleavage step of piRNA processing to generate piRNA intermediate fragments that are subsequently loaded to Piwi proteins. Cleaves either DNA or RNA substrates with similar affinity, producing a 5' phosphate end, in this way it participates in the processing of primary piRNA transcripts. piRNAs provide essential protection against the activity of mobile genetic elements. piRNA-mediated transposon silencing is thus critical for maintaining genome stability, in particular in germline cells when transposons are mobilized as a consequence of wide-spread genomic demethylation. PA may act as signaling molecule in the recognition/transport of the precursor RNAs of primary piRNAs. Interacts with tesmin in testes, suggesting a role in spermatogenesis via association with its interacting partner. The polypeptide is Mitochondrial cardiolipin hydrolase (PLD6) (Canis lupus familiaris (Dog)).